We begin with the raw amino-acid sequence, 396 residues long: Protein-export membrane protein SecD (396 aa).

Helical transmembrane passes span 12 to 32 (ILIL…KGLD), 243 to 263 (LKGT…IVSI), 272 to 292 (IPIL…ASLI), 298 to 318 (LPSI…QIVI), 338 to 358 (FFII…LFVL), and 360 to 380 (VGML…GIFI).

This sequence belongs to the SecD/SecF family. SecD subfamily. Part of the protein translocation apparatus. Forms a complex with SecF.

It is found in the cell membrane. Involved in protein export. The sequence is that of Protein-export membrane protein SecD from Methanocaldococcus jannaschii (strain ATCC 43067 / DSM 2661 / JAL-1 / JCM 10045 / NBRC 100440) (Methanococcus jannaschii).